Here is a 285-residue protein sequence, read N- to C-terminus: Eukaryotic translation initiation factor 3 subunit F-2 (285 aa).

One can recognise an MPN domain in the interval 11 to 145 (VVLQPLVLFQ…TRLYCGVEMG (135 aa)).

Belongs to the eIF-3 subunit F family. As to quaternary structure, component of the eukaryotic translation initiation factor 3 (eIF-3) complex. The eIF-3 complex interacts with pix.

Its subcellular location is the cytoplasm. In terms of biological role, component of the eukaryotic translation initiation factor 3 (eIF-3) complex, which is involved in protein synthesis of a specialized repertoire of mRNAs and, together with other initiation factors, stimulates binding of mRNA and methionyl-tRNAi to the 40S ribosome. The eIF-3 complex specifically targets and initiates translation of a subset of mRNAs involved in cell proliferation. The chain is Eukaryotic translation initiation factor 3 subunit F-2 from Drosophila ananassae (Fruit fly).